The following is a 558-amino-acid chain: Probable rhamnogalacturonase B (558 aa).

The N-terminal stretch at 1 to 21 (MLLDKLSVLSFLGLAPIFAAA) is a signal peptide. Residues cysteine 42 and cysteine 68 are joined by a disulfide bond. Asparagine 145 is a glycosylation site (N-linked (GlcNAc...) asparagine). The active-site Proton donor is the aspartate 219. An intrachain disulfide couples cysteine 221 to cysteine 238. N-linked (GlcNAc...) asparagine glycans are attached at residues asparagine 239 and asparagine 254. Histidine 294 is a catalytic residue. The N-linked (GlcNAc...) asparagine glycan is linked to asparagine 321. 2 disulfides stabilise this stretch: cysteine 344/cysteine 350 and cysteine 372/cysteine 381. Over residues 503–526 (VGAQEGSTTSAPSFAAPSGAGNSP) the composition is skewed to low complexity. A disordered region spans residues 503–558 (VGAQEGSTTSAPSFAAPSGAGNSPQGPTGASGFGEKGQQGEQGEQGEQGEQGVCYV).

Belongs to the glycosyl hydrolase 28 family.

The protein localises to the secreted. It carries out the reaction Endohydrolysis of alpha-D-GalA-(1-&gt;2)-alpha-L-Rha glycosidic bond in the rhamnogalacturonan I backbone with initial inversion of anomeric configuration releasing oligosaccharides with beta-D-GalA at the reducing end.. Functionally, pectinolytic enzymes consist of four classes of enzymes: pectine lyase, polygalacturonase, pectin methylesterase and rhamnogalacturonase. Hydrolyzes alpha-D-galacturonopyranosyl-(1,2)-alpha-L-rhamnopyranosyl linkages in the backbone of the hairy regions of pectins. This chain is Probable rhamnogalacturonase B (rhgB), found in Aspergillus niger (strain ATCC MYA-4892 / CBS 513.88 / FGSC A1513).